Consider the following 121-residue polypeptide: Large ribosomal subunit protein bL20 (121 aa).

Belongs to the bacterial ribosomal protein bL20 family.

Its function is as follows. Binds directly to 23S ribosomal RNA and is necessary for the in vitro assembly process of the 50S ribosomal subunit. It is not involved in the protein synthesizing functions of that subunit. The polypeptide is Large ribosomal subunit protein bL20 (Persephonella marina (strain DSM 14350 / EX-H1)).